A 505-amino-acid chain; its full sequence is Histidine ammonia-lyase (505 aa).

The segment at residues 141 to 143 is a cross-link (5-imidazolinone (Ala-Gly)); it reads ASG. Ser-142 bears the 2,3-didehydroalanine (Ser) mark.

It belongs to the PAL/histidase family. Contains an active site 4-methylidene-imidazol-5-one (MIO), which is formed autocatalytically by cyclization and dehydration of residues Ala-Ser-Gly.

It localises to the cytoplasm. It carries out the reaction L-histidine = trans-urocanate + NH4(+). The protein operates within amino-acid degradation; L-histidine degradation into L-glutamate; N-formimidoyl-L-glutamate from L-histidine: step 1/3. This Bacillus cereus (strain 03BB102) protein is Histidine ammonia-lyase.